The chain runs to 235 residues: Sugar fermentation stimulation protein homolog (235 aa).

It belongs to the SfsA family.

This chain is Sugar fermentation stimulation protein homolog, found in Maricaulis maris (strain MCS10) (Caulobacter maris).